The sequence spans 66 residues: Large ribosomal subunit protein bL35 (66 aa).

The segment covering Met-1–Arg-16 has biased composition (basic residues). Positions Met-1–Gly-21 are disordered.

It belongs to the bacterial ribosomal protein bL35 family.

The polypeptide is Large ribosomal subunit protein bL35 (Streptococcus mutans serotype c (strain ATCC 700610 / UA159)).